Reading from the N-terminus, the 418-residue chain is Serine hydroxymethyltransferase (418 aa).

(6S)-5,6,7,8-tetrahydrofolate is bound by residues Leu-121 and 125 to 127; that span reads GHL. At Lys-230 the chain carries N6-(pyridoxal phosphate)lysine. 355–357 is a (6S)-5,6,7,8-tetrahydrofolate binding site; the sequence is SPF.

This sequence belongs to the SHMT family. As to quaternary structure, homodimer. Requires pyridoxal 5'-phosphate as cofactor.

It localises to the cytoplasm. It carries out the reaction (6R)-5,10-methylene-5,6,7,8-tetrahydrofolate + glycine + H2O = (6S)-5,6,7,8-tetrahydrofolate + L-serine. It participates in one-carbon metabolism; tetrahydrofolate interconversion. Its pathway is amino-acid biosynthesis; glycine biosynthesis; glycine from L-serine: step 1/1. Catalyzes the reversible interconversion of serine and glycine with tetrahydrofolate (THF) serving as the one-carbon carrier. This reaction serves as the major source of one-carbon groups required for the biosynthesis of purines, thymidylate, methionine, and other important biomolecules. Also exhibits THF-independent aldolase activity toward beta-hydroxyamino acids, producing glycine and aldehydes, via a retro-aldol mechanism. The polypeptide is Serine hydroxymethyltransferase (Streptococcus pyogenes serotype M3 (strain ATCC BAA-595 / MGAS315)).